The primary structure comprises 185 residues: Ribosome-recycling factor (185 aa).

The segment at 143–163 (RKDGEAGEDEVARAEKDLDKS) is disordered.

The protein belongs to the RRF family.

It localises to the cytoplasm. Responsible for the release of ribosomes from messenger RNA at the termination of protein biosynthesis. May increase the efficiency of translation by recycling ribosomes from one round of translation to another. This chain is Ribosome-recycling factor, found in Mycobacterium ulcerans (strain Agy99).